The primary structure comprises 502 residues: Inosine-5'-monophosphate dehydrogenase 2 (502 aa).

At S2 the chain carries N-acetylserine. The 60-residue stretch at 166–225 (MKSCENKDYYVPWDIDLDKIEAVLEDKQKGFVVLEKEGETVNVVTKDDVERVKGYPKLGS) folds into the CBS domain. NAD(+) is bound by residues 264–266 (DSS) and 314–316 (GMG). G316 and G318 together coordinate K(+). Residue S319 participates in IMP binding. C321 contributes to the K(+) binding site. The active-site Thioimidate intermediate is C321. Residues 354 to 356 (DGG), 377 to 378 (GS), and 401 to 405 (YRGMG) each bind IMP. R417 functions as the Proton acceptor in the catalytic mechanism. An IMP-binding site is contributed by Q429. Positions 488, 489, and 490 each coordinate K(+).

This sequence belongs to the IMPDH/GMPR family. Homotetramer. It depends on K(+) as a cofactor.

It localises to the cytoplasm. The catalysed reaction is IMP + NAD(+) + H2O = XMP + NADH + H(+). It functions in the pathway purine metabolism; XMP biosynthesis via de novo pathway; XMP from IMP: step 1/1. Mycophenolic acid (MPA) is a non-competitive inhibitor that prevents formation of the closed enzyme conformation by binding to the same site as the amobile flap. In contrast, mizoribine monophosphate (MZP) is a competitive inhibitor that induces the closed conformation. MPA is a potent inhibitor of mammalian IMPDHs but a poor inhibitor of the bacterial enzymes. MZP is a more potent inhibitor of bacterial IMPDH. Functionally, catalyzes the conversion of inosine 5'-phosphate (IMP) to xanthosine 5'-phosphate (XMP), the first committed and rate-limiting step in the de novo synthesis of guanine nucleotides, and therefore plays an important role in the regulation of cell growth. This chain is Inosine-5'-monophosphate dehydrogenase 2, found in Arabidopsis thaliana (Mouse-ear cress).